The following is a 333-amino-acid chain: Protein-methionine-sulfoxide reductase catalytic subunit MsrP (333 aa).

The tat-type signal signal peptide spans 1–43 (MHKHRKPTEADVTPESLFYQRRRILKALGISAAALSLPFSAQA). Residues Asn-87, 90–91 (YE), Cys-145, Thr-180, Asn-232, Arg-237, and 248–250 (NIK) each bind Mo-molybdopterin.

This sequence belongs to the MsrP family. In terms of assembly, heterodimer of a catalytic subunit (MsrP) and a heme-binding subunit (MsrQ). The cofactor is Mo-molybdopterin. Predicted to be exported by the Tat system. The position of the signal peptide cleavage has not been experimentally proven.

The protein resides in the periplasm. It carries out the reaction L-methionyl-[protein] + a quinone + H2O = L-methionyl-(S)-S-oxide-[protein] + a quinol. The enzyme catalyses L-methionyl-[protein] + a quinone + H2O = L-methionyl-(R)-S-oxide-[protein] + a quinol. Its function is as follows. Part of the MsrPQ system that repairs oxidized periplasmic proteins containing methionine sulfoxide residues (Met-O), using respiratory chain electrons. Thus protects these proteins from oxidative-stress damage caused by reactive species of oxygen and chlorine generated by the host defense mechanisms. MsrPQ is essential for the maintenance of envelope integrity under bleach stress, rescuing a wide series of structurally unrelated periplasmic proteins from methionine oxidation. The catalytic subunit MsrP is non-stereospecific, being able to reduce both (R-) and (S-) diastereoisomers of methionine sulfoxide. The protein is Protein-methionine-sulfoxide reductase catalytic subunit MsrP of Pectobacterium carotovorum subsp. carotovorum (strain PC1).